The primary structure comprises 260 residues: 2-oxo-tetronate isomerase (260 aa).

The active-site Proton donor/acceptor is the glutamate 143. Mg(2+) contacts are provided by glutamate 143, aspartate 178, glutamine 204, and glutamate 240. Catalysis depends on glutamate 240, which acts as the Proton donor/acceptor.

The protein belongs to the hyi family. OtnI subfamily.

It carries out the reaction 2-dehydro-L-erythronate = 3-dehydro-L-erythronate. It catalyses the reaction 2-dehydro-D-erythronate = 3-dehydro-D-erythronate. Catalyzes the isomerization of 2-oxo-tetronate to 3-oxo-tetronate. The polypeptide is 2-oxo-tetronate isomerase (Cupriavidus necator (strain ATCC 17699 / DSM 428 / KCTC 22496 / NCIMB 10442 / H16 / Stanier 337) (Ralstonia eutropha)).